Here is a 397-residue protein sequence, read N- to C-terminus: FAD-dependent monooxygenase trt8 (397 aa).

The active site involves Tyr53. Asp145 and Ala158 together coordinate FAD.

Belongs to the paxM FAD-dependent monooxygenase family. It depends on FAD as a cofactor.

The protein operates within secondary metabolite biosynthesis; terpenoid biosynthesis. Its function is as follows. FAD-dependent monooxygenase; part of the gene cluster that mediates the biosynthesis of terretonin, a fungal meroterpenoid that acts as a mycotoxin. The first step of the pathway is the synthesis of 3,5-dimethylorsellinic acid (DMOA) by the polyketide synthase trt4. DMOA is then prenylated into farnesyl-DMOA by the polyprenyl transferase trt2. Methylation by the methyltransferase trt5 then leads to farnesyl-DMOA methyl ester which is further subject to epoxidation by the FAD-dependent monooxygenase trt8 to yield epoxyfarnesyl-DMOA methyl ester. Cyclization of epoxyfarnesyl-DMOA methyl ester by the terpene cyclase trt1 leads to a tetracycle intermediate which is in turn converted to preterretonin. Dehydrogenase trt9 comes next to transform preterretonin to preterrenoid. The FAD-dependent monooxygenase trt3 is then required for the C-hydroxylation at C16 of preterrenoid to yield terrenoid. The cytochrome P450 trt6 catalyzes three successive oxidations to transform terrenoid into an unstable intermediate, which then undergoes the D-ring expansion and unusual rearrangement of the methoxy group to afford the core skeleton of terretonin. Trt14 catalyzes the D-ring expansion of terretonin involving intramolecular methoxy rearrangement as well as the hydrolysis of the expanded D-ring and the methyl ester moiety. Finally, the nonheme iron-dependent dioxygenase trt7 accomplishes the last two oxidation reactions steps to complete the biosynthesis of terretonin. Terretonin C is produced via spontaneous decarboxylation of the terretonin precursor. Another shunt product of the terretonin biosynthesis is dihydrofarnesyl-DMOA, derived from epoxyfarnesyl-DMOA through hydrolysis of the epoxide. The sequence is that of FAD-dependent monooxygenase trt8 from Aspergillus terreus (strain NIH 2624 / FGSC A1156).